Consider the following 137-residue polypeptide: Putative protein YjhV (137 aa).

Residues 1-16 (MVGYHQTNQKTDTGKT) show a composition bias toward polar residues. Residues 1–20 (MVGYHQTNQKTDTGKTLTRR) are disordered.

This Escherichia coli (strain K12) protein is Putative protein YjhV (yjhV).